Here is a 200-residue protein sequence, read N- to C-terminus: Ribonuclease HII (200 aa).

Positions 14–200 (ERVAGLDEAG…HRQSFTLFRD (187 aa)) constitute an RNase H type-2 domain. A divalent metal cation contacts are provided by D20, E21, and D112.

It belongs to the RNase HII family. Requires Mn(2+) as cofactor. It depends on Mg(2+) as a cofactor.

Its subcellular location is the cytoplasm. The enzyme catalyses Endonucleolytic cleavage to 5'-phosphomonoester.. Functionally, endonuclease that specifically degrades the RNA of RNA-DNA hybrids. In Salinibacter ruber (strain DSM 13855 / M31), this protein is Ribonuclease HII.